A 390-amino-acid polypeptide reads, in one-letter code: Chalcone synthase (390 aa).

Residue C164 is part of the active site.

The protein belongs to the thiolase-like superfamily. Chalcone/stilbene synthases family.

It catalyses the reaction (E)-4-coumaroyl-CoA + 3 malonyl-CoA + 3 H(+) = 2',4,4',6'-tetrahydroxychalcone + 3 CO2 + 4 CoA. The protein operates within secondary metabolite biosynthesis; flavonoid biosynthesis. In terms of biological role, the primary product of this enzyme is 4,2',4',6'-tetrahydroxychalcone (also termed naringenin-chalcone or chalcone) which undergoes enzyme-catalyzed or spontaneous isomerization into naringenin. This Hypericum androsaemum (Tutsan) protein is Chalcone synthase.